Consider the following 119-residue polypeptide: Large ribosomal subunit protein uL22 (119 aa).

It belongs to the universal ribosomal protein uL22 family. As to quaternary structure, part of the 50S ribosomal subunit.

Its function is as follows. This protein binds specifically to 23S rRNA; its binding is stimulated by other ribosomal proteins, e.g. L4, L17, and L20. It is important during the early stages of 50S assembly. It makes multiple contacts with different domains of the 23S rRNA in the assembled 50S subunit and ribosome. In terms of biological role, the globular domain of the protein is located near the polypeptide exit tunnel on the outside of the subunit, while an extended beta-hairpin is found that lines the wall of the exit tunnel in the center of the 70S ribosome. The protein is Large ribosomal subunit protein uL22 of Bifidobacterium longum (strain DJO10A).